Consider the following 66-residue polypeptide: Large ribosomal subunit protein bL35 (66 aa).

The tract at residues 21 to 40 is disordered; that stretch reads KIKSTQSAKRHGMTKRSKRS. Over residues 28-40 the composition is skewed to basic residues; it reads AKRHGMTKRSKRS.

Belongs to the bacterial ribosomal protein bL35 family.

The sequence is that of Large ribosomal subunit protein bL35 from Ehrlichia canis (strain Jake).